The following is a 142-amino-acid chain: Hemoglobin subunit alpha-5 (142 aa).

Residues 2 to 142 (TFSSAEKAAI…VSAVLVSKYR (141 aa)) form the Globin domain. Histidine 59 is an O2 binding site. Histidine 88 is a heme b binding site.

This sequence belongs to the globin family. In terms of assembly, heterotetramer of two alpha chains and two beta chains. Red blood cells.

Functionally, this is a larval (tadpole) alpha-globin. The sequence is that of Hemoglobin subunit alpha-5 (hba5) from Xenopus laevis (African clawed frog).